Consider the following 258-residue polypeptide: Triosephosphate isomerase (258 aa).

A substrate-binding site is contributed by 11 to 13; sequence NWK. His-101 (electrophile) is an active-site residue. Glu-173 serves as the catalytic Proton acceptor. Substrate-binding positions include Gly-179, Ser-219, and 240-241; that span reads GG.

This sequence belongs to the triosephosphate isomerase family. Homodimer.

Its subcellular location is the cytoplasm. The enzyme catalyses D-glyceraldehyde 3-phosphate = dihydroxyacetone phosphate. It participates in carbohydrate biosynthesis; gluconeogenesis. Its pathway is carbohydrate degradation; glycolysis; D-glyceraldehyde 3-phosphate from glycerone phosphate: step 1/1. Involved in the gluconeogenesis. Catalyzes stereospecifically the conversion of dihydroxyacetone phosphate (DHAP) to D-glyceraldehyde-3-phosphate (G3P). The chain is Triosephosphate isomerase from Streptomyces avermitilis (strain ATCC 31267 / DSM 46492 / JCM 5070 / NBRC 14893 / NCIMB 12804 / NRRL 8165 / MA-4680).